Here is a 546-residue protein sequence, read N- to C-terminus: Protein FAM124A (546 aa).

Disordered stretches follow at residues 1-37 (MDPK…SELS), 286-360 (FPKP…FQRS), and 488-546 (SSSS…EFYI). Low complexity predominate over residues 24-36 (SDYSHLSSTSSEL). Residues 286-302 (FPKPGRVHHASEKKRHS) show a composition bias toward basic residues. 2 stretches are compositionally biased toward polar residues: residues 304 to 324 (PLPS…SPLN) and 347 to 360 (ANST…FQRS). Residues 488–511 (SSSSATARAAPPAPSTSTLTDSSP) show a composition bias toward low complexity.

Belongs to the FAM124 family.

This chain is Protein FAM124A (FAM124A), found in Homo sapiens (Human).